A 142-amino-acid chain; its full sequence is Hemoglobin subunit alpha-1 (142 aa).

One can recognise a Globin domain in the interval 2-142; sequence VLSAADKSNV…VSTVLTSKYR (141 aa). Residue histidine 59 participates in O2 binding. Position 88 (histidine 88) interacts with heme b.

It belongs to the globin family. As to quaternary structure, heterotetramer of two alpha chains and two beta chains.

Involved in oxygen transport from the lung to the various peripheral tissues. Its function is as follows. Hemopressin acts as an antagonist peptide of the cannabinoid receptor CNR1. Hemopressin-binding efficiently blocks cannabinoid receptor CNR1 and subsequent signaling. The sequence is that of Hemoglobin subunit alpha-1 (HBA1) from Capra hircus (Goat).